A 506-amino-acid polypeptide reads, in one-letter code: ATP synthase subunit alpha (506 aa).

Residue 170 to 177 (GDRQTGKT) coordinates ATP.

This sequence belongs to the ATPase alpha/beta chains family. In terms of assembly, F-type ATPases have 2 components, CF(1) - the catalytic core - and CF(0) - the membrane proton channel. CF(1) has five subunits: alpha(3), beta(3), gamma(1), delta(1), epsilon(1). CF(0) has four main subunits: a(1), b(1), b'(1) and c(9-12).

Its subcellular location is the cellular thylakoid membrane. It carries out the reaction ATP + H2O + 4 H(+)(in) = ADP + phosphate + 5 H(+)(out). Its function is as follows. Produces ATP from ADP in the presence of a proton gradient across the membrane. The alpha chain is a regulatory subunit. In Synechococcus sp. (strain JA-3-3Ab) (Cyanobacteria bacterium Yellowstone A-Prime), this protein is ATP synthase subunit alpha.